A 146-amino-acid chain; its full sequence is Large ribosomal subunit protein uL15 (146 aa).

The span at 1–13 shows a compositional bias: basic and acidic residues; it reads MKLNELHPSEGSR. Residues 1 to 56 form a disordered region; it reads MKLNELHPSEGSRHARKRVGRGTSSGFGKTSGRGQKGQHARSGGNTRLGFEGGQMP. Gly residues predominate over residues 23-35; that stretch reads TSSGFGKTSGRGQ.

The protein belongs to the universal ribosomal protein uL15 family. As to quaternary structure, part of the 50S ribosomal subunit.

In terms of biological role, binds to the 23S rRNA. This Lactobacillus delbrueckii subsp. bulgaricus (strain ATCC 11842 / DSM 20081 / BCRC 10696 / JCM 1002 / NBRC 13953 / NCIMB 11778 / NCTC 12712 / WDCM 00102 / Lb 14) protein is Large ribosomal subunit protein uL15.